Consider the following 311-residue polypeptide: Probable cell division protein WhiA (311 aa).

The H-T-H motif DNA-binding region spans 274 to 308 (SLKELGEMIPSGAISKSGINHRIRKINEFAEKLRE).

The protein belongs to the WhiA family.

Involved in cell division and chromosome segregation. The sequence is that of Probable cell division protein WhiA from Enterococcus faecalis (strain ATCC 700802 / V583).